We begin with the raw amino-acid sequence, 261 residues long: Thiazole synthase (261 aa).

Lysine 102 acts as the Schiff-base intermediate with DXP in catalysis. Residues glycine 163, 189 to 190 (AG), and 211 to 212 (NT) contribute to the 1-deoxy-D-xylulose 5-phosphate site.

The protein belongs to the ThiG family. Homotetramer. Forms heterodimers with either ThiH or ThiS.

It localises to the cytoplasm. The enzyme catalyses [ThiS sulfur-carrier protein]-C-terminal-Gly-aminoethanethioate + 2-iminoacetate + 1-deoxy-D-xylulose 5-phosphate = [ThiS sulfur-carrier protein]-C-terminal Gly-Gly + 2-[(2R,5Z)-2-carboxy-4-methylthiazol-5(2H)-ylidene]ethyl phosphate + 2 H2O + H(+). Its pathway is cofactor biosynthesis; thiamine diphosphate biosynthesis. In terms of biological role, catalyzes the rearrangement of 1-deoxy-D-xylulose 5-phosphate (DXP) to produce the thiazole phosphate moiety of thiamine. Sulfur is provided by the thiocarboxylate moiety of the carrier protein ThiS. In vitro, sulfur can be provided by H(2)S. The protein is Thiazole synthase of Acinetobacter baumannii (strain AB307-0294).